The sequence spans 276 residues: Undecaprenyl-diphosphatase (276 aa).

A run of 7 helical transmembrane segments spans residues 48 to 68, 92 to 112, 119 to 139, 155 to 175, 196 to 216, 229 to 249, and 255 to 275; these read AANSFKVVIQLGSILAVAIVF, LTIAQIAVGLVPAAVLGFLFE, LFSVRTVAYGLIAGAVLMLIA, ITYKQAFCVGLFQCLALWPGF, ADFTFIMAIPIMAGASLLKLV, FFLVGFICAFVVALLVVKFFL, and IKLVPFAIYRVILGIILIMLV.

The protein belongs to the UppP family.

Its subcellular location is the cell membrane. The catalysed reaction is di-trans,octa-cis-undecaprenyl diphosphate + H2O = di-trans,octa-cis-undecaprenyl phosphate + phosphate + H(+). In terms of biological role, catalyzes the dephosphorylation of undecaprenyl diphosphate (UPP). Confers resistance to bacitracin. The polypeptide is Undecaprenyl-diphosphatase (Bacillus velezensis (strain DSM 23117 / BGSC 10A6 / LMG 26770 / FZB42) (Bacillus amyloliquefaciens subsp. plantarum)).